Reading from the N-terminus, the 189-residue chain is Thymidine kinase (189 aa).

ATP contacts are provided by residues 9–16 (GTMNSGKS) and 85–88 (DEAQ). Glu86 functions as the Proton acceptor in the catalytic mechanism. Residues Cys143, Cys146, Cys180, and His183 each contribute to the Zn(2+) site.

The protein belongs to the thymidine kinase family. Homotetramer.

The protein localises to the cytoplasm. The enzyme catalyses thymidine + ATP = dTMP + ADP + H(+). In Lactococcus lactis subsp. lactis (strain IL1403) (Streptococcus lactis), this protein is Thymidine kinase.